Here is a 178-residue protein sequence, read N- to C-terminus: Large ribosomal subunit protein uL13m (178 aa).

This sequence belongs to the universal ribosomal protein uL13 family. As to quaternary structure, component of the mitochondrial ribosome large subunit (39S) which comprises a 16S rRNA and about 50 distinct proteins.

The protein resides in the mitochondrion. The chain is Large ribosomal subunit protein uL13m (mRpL13) from Drosophila melanogaster (Fruit fly).